We begin with the raw amino-acid sequence, 156 residues long: Small ribosomal subunit protein uS7 (156 aa).

The protein belongs to the universal ribosomal protein uS7 family. As to quaternary structure, part of the 30S ribosomal subunit. Contacts proteins S9 and S11.

In terms of biological role, one of the primary rRNA binding proteins, it binds directly to 16S rRNA where it nucleates assembly of the head domain of the 30S subunit. Is located at the subunit interface close to the decoding center, probably blocks exit of the E-site tRNA. The sequence is that of Small ribosomal subunit protein uS7 from Desulforamulus reducens (strain ATCC BAA-1160 / DSM 100696 / MI-1) (Desulfotomaculum reducens).